The following is a 149-amino-acid chain: Ribosome-binding factor A (149 aa).

A disordered region spans residues 124–149; it reads AKLREGAVPAGDADPYKTSSKSESEE.

The protein belongs to the RbfA family. In terms of assembly, monomer. Binds 30S ribosomal subunits, but not 50S ribosomal subunits or 70S ribosomes.

It localises to the cytoplasm. Functionally, one of several proteins that assist in the late maturation steps of the functional core of the 30S ribosomal subunit. Associates with free 30S ribosomal subunits (but not with 30S subunits that are part of 70S ribosomes or polysomes). Required for efficient processing of 16S rRNA. May interact with the 5'-terminal helix region of 16S rRNA. This Corynebacterium glutamicum (strain R) protein is Ribosome-binding factor A.